Here is a 699-residue protein sequence, read N- to C-terminus: tRNA 5-methylaminomethyl-2-thiouridine biosynthesis bifunctional protein MnmC (699 aa).

The tract at residues 1 to 260 (MTAKPQKSCQ…ERKLLRQQAD (260 aa)) is tRNA (mnm(5)s(2)U34)-methyltransferase. Residues 282 to 699 (VGGGLASANL…LRKLLKGKAL (418 aa)) form an FAD-dependent cmnm(5)s(2)U34 oxidoreductase region.

This sequence in the N-terminal section; belongs to the methyltransferase superfamily. tRNA (mnm(5)s(2)U34)-methyltransferase family. It in the C-terminal section; belongs to the DAO family. It depends on FAD as a cofactor.

Its subcellular location is the cytoplasm. The enzyme catalyses 5-aminomethyl-2-thiouridine(34) in tRNA + S-adenosyl-L-methionine = 5-methylaminomethyl-2-thiouridine(34) in tRNA + S-adenosyl-L-homocysteine + H(+). In terms of biological role, catalyzes the last two steps in the biosynthesis of 5-methylaminomethyl-2-thiouridine (mnm(5)s(2)U) at the wobble position (U34) in tRNA. Catalyzes the FAD-dependent demodification of cmnm(5)s(2)U34 to nm(5)s(2)U34, followed by the transfer of a methyl group from S-adenosyl-L-methionine to nm(5)s(2)U34, to form mnm(5)s(2)U34. This is tRNA 5-methylaminomethyl-2-thiouridine biosynthesis bifunctional protein MnmC from Shewanella sp. (strain MR-4).